The following is a 369-amino-acid chain: Protein V (369 aa).

Disordered stretches follow at residues 1–24 (MDQDALISKEDSEVEREASGGRES) and 38–320 (SEPT…GHRR). The segment covering 7–20 (ISKEDSEVEREASG) has biased composition (basic and acidic residues). A compositionally biased stretch (polar residues) spans 50–61 (LHNTINTLQRPG). 2 stretches are compositionally biased toward basic and acidic residues: residues 99 to 110 (AEAHARNVDKQN) and 150 to 168 (GAEDENREMAANPDKRGED). A phosphoserine; by host mark is found at S249, S257, and S260. H318, C337, C341, C353, C355, C358, C362, and C365 together coordinate Zn(2+).

Belongs to the paramyxoviruses V protein family. Interacts with host IFIH1/MDA5 and DHX58/LGP2. Interacts with host IRF3. Interacts with host RIGI regulatory protein (via CARDs domain) and host TRIM25 (via SPRY domain); these interactions prevent TRIM25-mediated ubiquitination of RIG-I and disrupts downstream RIG-I signaling.

It is found in the host cytoplasm. Plays an essential role in the inhibition of host immune response. Prevents the establishment of cellular antiviral state by blocking interferon-alpha/beta (IFN-alpha/beta) production and signaling pathway. Interacts with host IFIH1/MDA5 and DHX58/LGP2 to inhibit the transduction pathway involved in the activation of IFN-beta promoter, thus protecting the virus against cell antiviral state. Also interacts with and inhibits host IRF3. Blocks the type I interferon signaling pathway by disrupting the RIG-I signaling pathway. In Sendai virus (strain Hamamatsu) (SeV), this protein is Protein V (P/V/C).